A 189-amino-acid polypeptide reads, in one-letter code: Protein Rex (189 aa).

Positions 1–16 (MPKTRRRPRRSQRKRP) are enriched in basic residues. Residues 1–27 (MPKTRRRPRRSQRKRPPTPWPTSQGLD) are disordered. The Nuclear localization signal, and RNA-binding (RxRE) motif lies at 2-18 (PKTRRRPRRSQRKRPPT). Residues 56–70 (RPAYIVTPYWPPVQS) form a homomultimerization region. A Phosphoserine; by host modification is found at Ser-70. A disordered region spans residues 73-189 (SPGTPSMDAL…PPSPGPSCPT (117 aa)). Positions 80–94 (DALSAQLYSSLSLDS) are enriched in low complexity. Residues 82–93 (LSAQLYSSLSLD) carry the Nuclear export signal motif. Positions 123 to 131 (PSSRPCANT) are homomultimerization. Residues 143–164 (LGSTSQPCLFQTPDSGPKTCTP) are compositionally biased toward polar residues. Thr-174 carries the post-translational modification Phosphothreonine; by host. Residue Ser-177 is modified to Phosphoserine; by host. The span at 178 to 189 (FPPPSPGPSCPT) shows a compositional bias: pro residues.

The protein belongs to the deltaretrovirus Rex protein family. In terms of assembly, homomultimer. Multimeric assembly is essential for activity and involves XPO1. Binds to human XPO1 and KPNB1. Interacts (via N-terminal nuclear localization signal) with human NPM1.

It localises to the host nucleus. The protein resides in the host nucleolus. The protein localises to the host cytoplasm. Rex escorts unspliced gag-pro-pol and singly spliced env mRNAs out of the nucleus of infected cells. These mRNAs carry a recognition sequence called Rex responsive element (RxRE or XRE) located at the 3' region of the long terminal repeat (LTR). This function is essential since most HTLV proteins are translated from unspliced or partially spliced pre-mRNAs that cannot exit the nucleus by the pathway used by fully processed cellular mRNAs. Rex itself is translated from a fully spliced mRNA that probably readily exits the nucleus. Rex's nuclear localization signal (NLS) binds directly to KPNB1/importin beta-1 without previous binding to KPNA1/importin alpha-1. KPNB1 binds to the GDP bound form of RAN (Ran-GDP) and targets Rex to the nucleus. In the nucleus, the conversion from Ran-GDP to Ran-GTP dissociates Rex from KPNB1 and allows Rex's binding to the RRE in viral pre-mRNAs. Rex multimerizes on the RRE via cooperative assembly. This multimerization is critical for its full biological activity, since it may shield the viral RNA from being spliced or down-regulated, and probably exposes Rex's nuclear export signal (NES) to the surface. Rex can then form a complex with XPO1/CRM1, RANBP3 and Ran-GTP, leading to nuclear export of the complex. Conversion from Ran-GTP to Ran-GDP mediates dissociation of the Rex/RRE/XPO1/RANBP3/RAN complex, so that Rex can return to the nucleus for a subsequent round of export. In Human T-cell leukemia virus 1 (strain Japan ATK-1 subtype A) (HTLV-1), this protein is Protein Rex.